The following is a 123-amino-acid chain: Small ribosomal subunit protein uS12 (123 aa).

At aspartate 89 the chain carries 3-methylthioaspartic acid. Residues 104 to 123 (TAGVKDRKQARSKYGAKRPK) form a disordered region. Basic residues predominate over residues 113-123 (ARSKYGAKRPK).

It belongs to the universal ribosomal protein uS12 family. In terms of assembly, part of the 30S ribosomal subunit. Contacts proteins S8 and S17. May interact with IF1 in the 30S initiation complex.

With S4 and S5 plays an important role in translational accuracy. In terms of biological role, interacts with and stabilizes bases of the 16S rRNA that are involved in tRNA selection in the A site and with the mRNA backbone. Located at the interface of the 30S and 50S subunits, it traverses the body of the 30S subunit contacting proteins on the other side and probably holding the rRNA structure together. The combined cluster of proteins S8, S12 and S17 appears to hold together the shoulder and platform of the 30S subunit. The protein is Small ribosomal subunit protein uS12 of Neisseria meningitidis serogroup C (strain 053442).